A 118-amino-acid chain; its full sequence is Large ribosomal subunit protein uL18 (118 aa).

This sequence belongs to the universal ribosomal protein uL18 family. In terms of assembly, part of the 50S ribosomal subunit; part of the 5S rRNA/L5/L18/L25 subcomplex. Contacts the 5S and 23S rRNAs.

In terms of biological role, this is one of the proteins that bind and probably mediate the attachment of the 5S RNA into the large ribosomal subunit, where it forms part of the central protuberance. The polypeptide is Large ribosomal subunit protein uL18 (Sulfurimonas denitrificans (strain ATCC 33889 / DSM 1251) (Thiomicrospira denitrificans (strain ATCC 33889 / DSM 1251))).